The chain runs to 308 residues: ABC transporter protein AbcA (308 aa).

The ABC transporter domain occupies Leu-6–Asp-245. Residue Gly-58–Ser-65 participates in ATP binding.

The protein belongs to the ABC transporter superfamily.

In terms of biological role, influences the expression of the surface array protein gene (vapA). May have both regulatory and transport activities. The polypeptide is ABC transporter protein AbcA (abcA) (Aeromonas salmonicida).